The following is a 310-amino-acid chain: Methionyl-tRNA formyltransferase (310 aa).

Residue 110–113 coordinates (6S)-5,6,7,8-tetrahydrofolate; it reads SLLP.

The protein belongs to the Fmt family.

The enzyme catalyses L-methionyl-tRNA(fMet) + (6R)-10-formyltetrahydrofolate = N-formyl-L-methionyl-tRNA(fMet) + (6S)-5,6,7,8-tetrahydrofolate + H(+). Attaches a formyl group to the free amino group of methionyl-tRNA(fMet). The formyl group appears to play a dual role in the initiator identity of N-formylmethionyl-tRNA by promoting its recognition by IF2 and preventing the misappropriation of this tRNA by the elongation apparatus. The polypeptide is Methionyl-tRNA formyltransferase (Clostridium tetani (strain Massachusetts / E88)).